Here is a 501-residue protein sequence, read N- to C-terminus: Aldehyde dehydrogenase, cytosolic 1 (501 aa).

Ser-2 bears the N-acetylserine mark. 2 positions are modified to N6-acetyllysine: Lys-91 and Lys-128. 246-251 (GSTEVG) is a binding site for NAD(+). N6-acetyllysine is present on Lys-252. Residue Glu-269 is the Proton acceptor of the active site. Cys-303 acts as the Nucleophile in catalysis. Residues Lys-353, Lys-367, and Lys-410 each carry the N6-acetyllysine modification. Ser-413 carries the post-translational modification Phosphoserine. Residues Lys-419 and Lys-435 each carry the N6-acetyllysine modification.

It belongs to the aldehyde dehydrogenase family. As to quaternary structure, homotetramer. Highest level in liver, high level in lung, low level in kidney and testis.

It localises to the cytoplasm. It carries out the reaction an aldehyde + NAD(+) + H2O = a carboxylate + NADH + 2 H(+). It functions in the pathway alcohol metabolism; ethanol degradation; acetate from ethanol: step 2/2. Can oxidize benzaldehyde, propionaldehyde and acetaldehyde. No detectable activity with retinal. The polypeptide is Aldehyde dehydrogenase, cytosolic 1 (Mus musculus (Mouse)).